The following is a 313-amino-acid chain: Porphobilinogen deaminase (313 aa).

The residue at position 242 (Cys242) is an S-(dipyrrolylmethanemethyl)cysteine.

The protein belongs to the HMBS family. Monomer. The cofactor is dipyrromethane.

The catalysed reaction is 4 porphobilinogen + H2O = hydroxymethylbilane + 4 NH4(+). It functions in the pathway porphyrin-containing compound metabolism; protoporphyrin-IX biosynthesis; coproporphyrinogen-III from 5-aminolevulinate: step 2/4. In terms of biological role, tetrapolymerization of the monopyrrole PBG into the hydroxymethylbilane pre-uroporphyrinogen in several discrete steps. The sequence is that of Porphobilinogen deaminase from Pseudomonas syringae pv. tomato (strain ATCC BAA-871 / DC3000).